A 141-amino-acid chain; its full sequence is Fluoride-specific ion channel FluC 1 (141 aa).

4 helical membrane passes run 12–32 (LYALIAAGSVIGGCARYLVGV), 44–64 (WATLFVNVTGSFVIGFYAAIA), 79–99 (FVMTGICGGYTTFSGFSLETF), and 107–127 (ALAALINLGVSPMSWLVAVWL). Gly-86 and Thr-89 together coordinate Na(+).

The protein belongs to the fluoride channel Fluc/FEX (TC 1.A.43) family.

The protein localises to the cell inner membrane. The catalysed reaction is fluoride(in) = fluoride(out). With respect to regulation, na(+) is not transported, but it plays an essential structural role and its presence is essential for fluoride channel function. Functionally, fluoride-specific ion channel. Important for reducing fluoride concentration in the cell, thus reducing its toxicity. The polypeptide is Fluoride-specific ion channel FluC 1 (Rhodopseudomonas palustris (strain BisB18)).